Reading from the N-terminus, the 198-residue chain is Recombination protein RecR (198 aa).

Residues 57–72 (CSVCGHITENDPCYIC) form a C4-type zinc finger. One can recognise a Toprim domain in the interval 80–175 (SVICVVEDDK…KVTRLAQGLS (96 aa)).

Belongs to the RecR family.

May play a role in DNA repair. It seems to be involved in an RecBC-independent recombinational process of DNA repair. It may act with RecF and RecO. This chain is Recombination protein RecR, found in Staphylococcus aureus (strain JH1).